Reading from the N-terminus, the 777-residue chain is Rho guanine nucleotide exchange factor 38 (777 aa).

A Phosphothreonine modification is found at Thr-34. Positions 35-72 (DTVVESSVSGDHSGTLRRSQSDRTEYNQKLQEKMTPQG) are disordered. A compositionally biased stretch (polar residues) spans 37 to 52 (VVESSVSGDHSGTLRR). Over residues 53–66 (SQSDRTEYNQKLQE) the composition is skewed to basic and acidic residues. The region spanning 94–285 (KREKIIKELI…KDINVNINEL (192 aa)) is the DH domain. Residues 327 to 536 (LKILTRGESQ…QNQVLEEIQN (210 aa)) enclose the BAR domain. Positions 582 to 645 (SAEELYQAKR…YSSFLKPYNP (64 aa)) constitute an SH3 1 domain. Residues 673-694 (PASDSVTGTSESSIGDSSSSLS) form a disordered region. Low complexity predominate over residues 679-694 (TGTSESSIGDSSSSLS). Positions 713-776 (VDEQIFYAVH…PANYLGKMTY (64 aa)) constitute an SH3 2 domain.

In terms of biological role, may act as a guanine-nucleotide releasing factor. In Homo sapiens (Human), this protein is Rho guanine nucleotide exchange factor 38 (ARHGEF38).